The chain runs to 144 residues: Large ribosomal subunit protein uL11 (144 aa).

Belongs to the universal ribosomal protein uL11 family. In terms of assembly, part of the ribosomal stalk of the 50S ribosomal subunit. Interacts with L10 and the large rRNA to form the base of the stalk. L10 forms an elongated spine to which L12 dimers bind in a sequential fashion forming a multimeric L10(L12)X complex. One or more lysine residues are methylated.

Forms part of the ribosomal stalk which helps the ribosome interact with GTP-bound translation factors. This Neisseria gonorrhoeae (strain ATCC 700825 / FA 1090) protein is Large ribosomal subunit protein uL11.